Consider the following 100-residue polypeptide: Ubiquitin-related modifier 1 homolog (100 aa).

Gly-100 carries the 1-thioglycine modification. Gly-100 participates in a covalent cross-link: Glycyl lysine isopeptide (Gly-Lys) (interchain with K-? in acceptor proteins).

The protein belongs to the URM1 family. Post-translationally, C-terminal thiocarboxylation occurs in 2 steps, it is first acyl-adenylated (-COAMP) via the hesA/moeB/thiF part of the MOCS3 homolog, then thiocarboxylated (-COSH) via the rhodanese domain of the MOCS3 homolog.

It is found in the cytoplasm. The protein operates within tRNA modification; 5-methoxycarbonylmethyl-2-thiouridine-tRNA biosynthesis. Acts as a sulfur carrier required for 2-thiolation of mcm(5)S(2)U at tRNA wobble positions of cytosolic tRNA(Lys), tRNA(Glu) and tRNA(Gln). Serves as sulfur donor in tRNA 2-thiolation reaction by being thiocarboxylated (-COSH) at its C-terminus by MOCS3. The sulfur is then transferred to tRNA to form 2-thiolation of mcm(5)S(2)U. Also acts as a ubiquitin-like protein (UBL) that is covalently conjugated via an isopeptide bond to lysine residues of target proteins. The thiocarboxylated form serves as substrate for conjugation and oxidative stress specifically induces the formation of UBL-protein conjugates. This chain is Ubiquitin-related modifier 1 homolog, found in Caenorhabditis elegans.